The following is a 724-amino-acid chain: Golgin subfamily A member 6-like protein 6 (724 aa).

5 disordered regions span residues M1–A108, Q314–Q342, M374–R454, Q517–R548, and W561–H724. Positions L15–T29 are enriched in basic residues. A compositionally biased stretch (basic and acidic residues) spans M39 to P60. 2 stretches are compositionally biased toward polar residues: residues Q61–S71 and N79–G91. Over residues S94–A108 the composition is skewed to basic and acidic residues. Residues E164 to M686 adopt a coiled-coil conformation.

The protein belongs to the GOLGA6 family.

This chain is Golgin subfamily A member 6-like protein 6 (GOLGA6L6), found in Homo sapiens (Human).